Here is a 246-residue protein sequence, read N- to C-terminus: UDP-N-acetyl-D-mannosaminuronic acid transferase (246 aa).

The protein belongs to the glycosyltransferase 26 family.

The enzyme catalyses UDP-N-acetyl-alpha-D-mannosaminouronate + N-acetyl-alpha-D-glucosaminyl-di-trans,octa-cis-undecaprenyl diphosphate = beta-D-ManNAcA-(1-&gt;4)-alpha-D-GlcNAc-di-trans,octa-cis-undecaprenyl diphosphate + UDP + H(+). Its pathway is bacterial outer membrane biogenesis; enterobacterial common antigen biosynthesis. In terms of biological role, catalyzes the synthesis of Und-PP-GlcNAc-ManNAcA (Lipid II), the second lipid-linked intermediate involved in enterobacterial common antigen (ECA) synthesis. This Escherichia coli O1:K1 / APEC protein is UDP-N-acetyl-D-mannosaminuronic acid transferase.